Here is a 184-residue protein sequence, read N- to C-terminus: GTP cyclohydrolase 1 (184 aa).

Zn(2+) contacts are provided by Cys75, His78, and Cys146.

It belongs to the GTP cyclohydrolase I family. As to quaternary structure, toroid-shaped homodecamer, composed of two pentamers of five dimers.

It carries out the reaction GTP + H2O = 7,8-dihydroneopterin 3'-triphosphate + formate + H(+). It participates in cofactor biosynthesis; 7,8-dihydroneopterin triphosphate biosynthesis; 7,8-dihydroneopterin triphosphate from GTP: step 1/1. This is GTP cyclohydrolase 1 from Streptococcus pneumoniae serotype 2 (strain D39 / NCTC 7466).